The sequence spans 297 residues: ClpXP adapter protein SpxH (297 aa).

It belongs to the SpxH family. Interacts with Spx.

Its subcellular location is the cytoplasm. Its function is as follows. Adapter protein required for efficient degradation of Spx by ClpXP under non-stress conditions. Interaction with Spx stabilizes Spx and exposes the C-terminus of Spx for recognition and proteolysis by ClpXP. The polypeptide is ClpXP adapter protein SpxH (Bacillus cereus (strain ATCC 10987 / NRS 248)).